Here is a 289-residue protein sequence, read N- to C-terminus: Protease HtpX homolog (289 aa).

2 helical membrane passes run 9–29 (TGVLMAFLTALLVGIGYLIGG) and 31–51 (GGMIIAFTIALFMNLISYWFS). Histidine 133 contacts Zn(2+). The active site involves glutamate 134. Zn(2+) is bound at residue histidine 137. 2 helical membrane-spanning segments follow: residues 143–163 (TLIQTLAAVLAGAIMILVDFA) and 182–202 (IGLILAIVLAPLAATLIQLAI). Glutamate 207 lines the Zn(2+) pocket.

It belongs to the peptidase M48B family. Zn(2+) is required as a cofactor.

The protein resides in the cell membrane. This Pyrococcus abyssi (strain GE5 / Orsay) protein is Protease HtpX homolog.